A 419-amino-acid polypeptide reads, in one-letter code: UDP-N-acetylglucosamine 1-carboxyvinyltransferase (419 aa).

K22 to N23 is a phosphoenolpyruvate binding site. R93 contributes to the UDP-N-acetyl-alpha-D-glucosamine binding site. C117 (proton donor) is an active-site residue. C117 carries the 2-(S-cysteinyl)pyruvic acid O-phosphothioketal modification. The UDP-N-acetyl-alpha-D-glucosamine site is built by D306 and I328.

The protein belongs to the EPSP synthase family. MurA subfamily.

It is found in the cytoplasm. The enzyme catalyses phosphoenolpyruvate + UDP-N-acetyl-alpha-D-glucosamine = UDP-N-acetyl-3-O-(1-carboxyvinyl)-alpha-D-glucosamine + phosphate. It functions in the pathway cell wall biogenesis; peptidoglycan biosynthesis. Its function is as follows. Cell wall formation. Adds enolpyruvyl to UDP-N-acetylglucosamine. The protein is UDP-N-acetylglucosamine 1-carboxyvinyltransferase of Magnetococcus marinus (strain ATCC BAA-1437 / JCM 17883 / MC-1).